Reading from the N-terminus, the 156-residue chain is Transcription elongation factor GreA (156 aa).

Residues A46–E66 adopt a coiled-coil conformation.

The protein belongs to the GreA/GreB family.

Necessary for efficient RNA polymerase transcription elongation past template-encoded arresting sites. The arresting sites in DNA have the property of trapping a certain fraction of elongating RNA polymerases that pass through, resulting in locked ternary complexes. Cleavage of the nascent transcript by cleavage factors such as GreA or GreB allows the resumption of elongation from the new 3'terminus. GreA releases sequences of 2 to 3 nucleotides. The protein is Transcription elongation factor GreA of Ruegeria pomeroyi (strain ATCC 700808 / DSM 15171 / DSS-3) (Silicibacter pomeroyi).